We begin with the raw amino-acid sequence, 332 residues long: Ribosomal RNA small subunit methyltransferase C (332 aa).

Belongs to the methyltransferase superfamily. RsmC family. In terms of assembly, monomer.

Its subcellular location is the cytoplasm. The catalysed reaction is guanosine(1207) in 16S rRNA + S-adenosyl-L-methionine = N(2)-methylguanosine(1207) in 16S rRNA + S-adenosyl-L-homocysteine + H(+). Specifically methylates the guanine in position 1207 of 16S rRNA in the 30S particle. This is Ribosomal RNA small subunit methyltransferase C from Pseudomonas aeruginosa (strain LESB58).